A 212-amino-acid polypeptide reads, in one-letter code: Large ribosomal subunit protein uL4 (212 aa).

This sequence belongs to the universal ribosomal protein uL4 family. Part of the 50S ribosomal subunit.

One of the primary rRNA binding proteins, this protein initially binds near the 5'-end of the 23S rRNA. It is important during the early stages of 50S assembly. It makes multiple contacts with different domains of the 23S rRNA in the assembled 50S subunit and ribosome. Its function is as follows. Forms part of the polypeptide exit tunnel. The polypeptide is Large ribosomal subunit protein uL4 (Caulobacter sp. (strain K31)).